The sequence spans 428 residues: Glutamate-1-semialdehyde 2,1-aminomutase (428 aa).

N6-(pyridoxal phosphate)lysine is present on lysine 265.

Belongs to the class-III pyridoxal-phosphate-dependent aminotransferase family. HemL subfamily. As to quaternary structure, homodimer. Requires pyridoxal 5'-phosphate as cofactor.

Its subcellular location is the cytoplasm. It catalyses the reaction (S)-4-amino-5-oxopentanoate = 5-aminolevulinate. The protein operates within porphyrin-containing compound metabolism; protoporphyrin-IX biosynthesis; 5-aminolevulinate from L-glutamyl-tRNA(Glu): step 2/2. This chain is Glutamate-1-semialdehyde 2,1-aminomutase, found in Legionella pneumophila (strain Paris).